Consider the following 224-residue polypeptide: Fibrillarin-like rRNA/tRNA 2'-O-methyltransferase (224 aa).

Residues 82-83, 100-101, 125-126, and 145-148 each bind S-adenosyl-L-methionine; these read TT, EF, DA, and DVAQ.

It belongs to the methyltransferase superfamily. Fibrillarin family. As to quaternary structure, interacts with nop5. Component of box C/D small ribonucleoprotein (sRNP) particles that contain rpl7ae, FlpA and nop5, plus a guide RNA.

Functionally, involved in pre-rRNA and tRNA processing. Utilizes the methyl donor S-adenosyl-L-methionine to catalyze the site-specific 2'-hydroxyl methylation of ribose moieties in rRNA and tRNA. Site specificity is provided by a guide RNA that base pairs with the substrate. Methylation occurs at a characteristic distance from the sequence involved in base pairing with the guide RNA. The chain is Fibrillarin-like rRNA/tRNA 2'-O-methyltransferase from Methanothermobacter thermautotrophicus (strain ATCC 29096 / DSM 1053 / JCM 10044 / NBRC 100330 / Delta H) (Methanobacterium thermoautotrophicum).